A 249-amino-acid polypeptide reads, in one-letter code: Segregation and condensation protein A (249 aa).

This sequence belongs to the ScpA family. In terms of assembly, component of a cohesin-like complex composed of ScpA, ScpB and the Smc homodimer, in which ScpA and ScpB bind to the head domain of Smc. The presence of the three proteins is required for the association of the complex with DNA.

The protein localises to the cytoplasm. Participates in chromosomal partition during cell division. May act via the formation of a condensin-like complex containing Smc and ScpB that pull DNA away from mid-cell into both cell halves. This Listeria welshimeri serovar 6b (strain ATCC 35897 / DSM 20650 / CCUG 15529 / CIP 8149 / NCTC 11857 / SLCC 5334 / V8) protein is Segregation and condensation protein A.